Consider the following 505-residue polypeptide: Flagellin (505 aa).

This sequence belongs to the bacterial flagellin family.

It is found in the secreted. Its subcellular location is the bacterial flagellum. Its function is as follows. Flagellin is the subunit protein which polymerizes to form the filaments of bacterial flagella. This Salmonella derby protein is Flagellin (fliC).